The chain runs to 594 residues: Protein TRANSPORT INHIBITOR RESPONSE 1 (594 aa).

Residues 3–50 form the F-box domain; sequence KRIALSFPEEVLEHVFSFIQLDKDRNSVSLVCKSWYEIERWCRRKVFI. A 1D-myo-inositol hexakisphosphate-binding site is contributed by Lys74. The segment at 81-82 is interaction with auxin-responsive proteins; sequence DF. Residues 113 to 114 and Arg344 each bind 1D-myo-inositol hexakisphosphate; that span reads KR. Residues 347–352 form an interaction with auxin-responsive proteins region; it reads PSEPFV. Position 401-403 (401-403) interacts with 1D-myo-inositol hexakisphosphate; sequence RFR. Arg403 lines the (indol-3-yl)acetate pocket. Positions 405–409 are interaction with auxin-responsive proteins; sequence CIIEP. Residue Arg436 coordinates 1D-myo-inositol hexakisphosphate. 438-439 contacts (indol-3-yl)acetate; that stretch reads SL. The tract at residues 464 to 465 is interaction with auxin-responsive proteins; that stretch reads AF. Residues 484 to 485 and Arg509 each bind 1D-myo-inositol hexakisphosphate; that span reads RK.

In terms of assembly, interacts with auxin. Part of a SCF E3 ubiquitin ligase complex SCF(TIR1) composed of SKP1, CUL1, RBX1 and TIR1. SCF(TIR1) interacts with the COP9 signalosome (CSN) complex. Interacts with Aux/IAA proteins (IAA3, IAA7, IAA12 and IAA17) in an auxin-dependent manner. The interaction with IAA3, a negative regulator of auxin responses, is promoted by auxin, but repressed by juglon (5-hydroxy-1,4-naphthoquinone). Interactions with auxin-responsive proteins is inactivated by auxin antagonists. Expressed in roots, stems, leaves and flowers. In adult plants, mostly expressed in floral stigma, anther filaments, abscission zones and vascular tissues.

The protein localises to the nucleus. Its pathway is protein modification; protein ubiquitination. Its function is as follows. Auxin receptor that mediates Aux/IAA proteins proteasomal degradation and auxin-regulated transcription. The SCF(TIR1) E3 ubiquitin ligase complex is involved in auxin-mediated signaling pathway that regulate root and hypocotyl growth, lateral root formation, cell elongation, and gravitropism. Appears to allow pericycle cells to overcome G2 arrest prior to lateral root development. Plays a role in ethylene signaling in roots. Confers sensitivity to the virulent bacterial pathogen P.syringae. The chain is Protein TRANSPORT INHIBITOR RESPONSE 1 (TIR1) from Arabidopsis thaliana (Mouse-ear cress).